The sequence spans 79 residues: MTDVKKNENMTFEEAMKKLEEIVEKLEEGNVPLEEAIAFFQEGMKLSKLCHDKLQHVEKQLEYMLREDGELVPFSPEEE.

This sequence belongs to the XseB family. As to quaternary structure, heterooligomer composed of large and small subunits.

The protein localises to the cytoplasm. It carries out the reaction Exonucleolytic cleavage in either 5'- to 3'- or 3'- to 5'-direction to yield nucleoside 5'-phosphates.. In terms of biological role, bidirectionally degrades single-stranded DNA into large acid-insoluble oligonucleotides, which are then degraded further into small acid-soluble oligonucleotides. The protein is Exodeoxyribonuclease 7 small subunit of Geobacillus kaustophilus (strain HTA426).